A 381-amino-acid chain; its full sequence is Cobalt-precorrin-5B C(1)-methyltransferase (381 aa).

The protein belongs to the CbiD family.

It catalyses the reaction Co-precorrin-5B + S-adenosyl-L-methionine = Co-precorrin-6A + S-adenosyl-L-homocysteine. The protein operates within cofactor biosynthesis; adenosylcobalamin biosynthesis; cob(II)yrinate a,c-diamide from sirohydrochlorin (anaerobic route): step 6/10. Functionally, catalyzes the methylation of C-1 in cobalt-precorrin-5B to form cobalt-precorrin-6A. In Prochlorococcus marinus (strain NATL1A), this protein is Cobalt-precorrin-5B C(1)-methyltransferase.